The following is a 200-amino-acid chain: UPF0301 protein BOV_0485 (200 aa).

Belongs to the UPF0301 (AlgH) family.

The polypeptide is UPF0301 protein BOV_0485 (Brucella ovis (strain ATCC 25840 / 63/290 / NCTC 10512)).